The chain runs to 286 residues: Shikimate dehydrogenase (NADP(+)) (286 aa).

Shikimate contacts are provided by residues 20–22 (SLS) and Ser67. Lys71 (proton acceptor) is an active-site residue. Positions 92 and 107 each coordinate shikimate. Residues 131 to 135 (GGGGA) and Ala230 contribute to the NADP(+) site. Tyr232 serves as a coordination point for shikimate. Position 253 (Gly253) interacts with NADP(+).

Belongs to the shikimate dehydrogenase family. In terms of assembly, homodimer.

The catalysed reaction is shikimate + NADP(+) = 3-dehydroshikimate + NADPH + H(+). The protein operates within metabolic intermediate biosynthesis; chorismate biosynthesis; chorismate from D-erythrose 4-phosphate and phosphoenolpyruvate: step 4/7. Involved in the biosynthesis of the chorismate, which leads to the biosynthesis of aromatic amino acids. Catalyzes the reversible NADPH linked reduction of 3-dehydroshikimate (DHSA) to yield shikimate (SA). The polypeptide is Shikimate dehydrogenase (NADP(+)) (Lactococcus lactis subsp. lactis (strain IL1403) (Streptococcus lactis)).